Reading from the N-terminus, the 272-residue chain is Shikimate dehydrogenase (NADP(+)) (272 aa).

Residues Ser14–Ser16 and Thr61 each bind shikimate. Lys65 acts as the Proton acceptor in catalysis. Shikimate-binding residues include Asn86 and Asp102. NADP(+) is bound by residues Gly126 to Ala130, Asn150 to Lys155, and Met214. Tyr216 contacts shikimate. Gly239 provides a ligand contact to NADP(+).

Belongs to the shikimate dehydrogenase family. Homodimer.

The catalysed reaction is shikimate + NADP(+) = 3-dehydroshikimate + NADPH + H(+). It participates in metabolic intermediate biosynthesis; chorismate biosynthesis; chorismate from D-erythrose 4-phosphate and phosphoenolpyruvate: step 4/7. Its function is as follows. Involved in the biosynthesis of the chorismate, which leads to the biosynthesis of aromatic amino acids. Catalyzes the reversible NADPH linked reduction of 3-dehydroshikimate (DHSA) to yield shikimate (SA). This Pseudoalteromonas atlantica (strain T6c / ATCC BAA-1087) protein is Shikimate dehydrogenase (NADP(+)).